Reading from the N-terminus, the 422-residue chain is Adenylosuccinate synthetase (422 aa).

Residues 11 to 17 (GDEGKGK) and 39 to 41 (GHT) contribute to the GTP site. The Proton acceptor role is filled by D12. D12 and G39 together coordinate Mg(2+). IMP-binding positions include 12–15 (DEGK), 37–40 (NAGH), T129, R143, N219, T234, and R298. The Proton donor role is filled by H40. Residue 294 to 300 (VTTGRRR) participates in substrate binding. Residues R300, 326-328 (KLD), and 409-411 (GTG) contribute to the GTP site.

It belongs to the adenylosuccinate synthetase family. Homodimer. Mg(2+) serves as cofactor.

It localises to the cytoplasm. It catalyses the reaction IMP + L-aspartate + GTP = N(6)-(1,2-dicarboxyethyl)-AMP + GDP + phosphate + 2 H(+). Its pathway is purine metabolism; AMP biosynthesis via de novo pathway; AMP from IMP: step 1/2. Its function is as follows. Plays an important role in the de novo pathway and in the salvage pathway of purine nucleotide biosynthesis. Catalyzes the first committed step in the biosynthesis of AMP from IMP. The chain is Adenylosuccinate synthetase from Ajellomyces capsulatus (strain H143) (Darling's disease fungus).